Reading from the N-terminus, the 263-residue chain is Protein TILLER ANGLE CONTROL 1 (263 aa).

The short motif at 55 to 61 is the IGT motif element; that stretch reads GILAIGT. The segment at 243–263 is disordered; it reads GKKIHPEQLNGRSNAEGPLTA.

The protein belongs to the TAC family. As to expression, highly expressed in leaf sheath pulvinus. Expressed in shoot apical meristem and leaves.

Involved in the regulation of leaf growth angle. Promotes horizontal shoot growth. The sequence is that of Protein TILLER ANGLE CONTROL 1 from Zea mays (Maize).